Reading from the N-terminus, the 258-residue chain is Mitochondrial distribution and morphology protein 12 (258 aa).

The SMP-LTD domain maps to 1 to 233; the sequence is MSFDIHWSNL…WPSWIELDFN (233 aa). Positions 238–258 are disordered; sequence EDLQQSKDTPTTANTGTTTTN. Residues 246 to 258 show a composition bias toward low complexity; the sequence is TPTTANTGTTTTN.

It belongs to the MDM12 family. As to quaternary structure, component of the ER-mitochondria encounter structure (ERMES) or MDM complex, composed of MMM1, MDM10, MDM12 and MDM34. An MMM1 homodimer associates with one molecule of MDM12 on each side in a pairwise head-to-tail manner, and the SMP-LTD domains of MMM1 and MDM12 generate a continuous hydrophobic tunnel for phospholipid trafficking.

The protein resides in the mitochondrion outer membrane. It is found in the endoplasmic reticulum membrane. Functionally, component of the ERMES/MDM complex, which serves as a molecular tether to connect the endoplasmic reticulum (ER) and mitochondria. Components of this complex are involved in the control of mitochondrial shape and protein biogenesis, and function in nonvesicular lipid trafficking between the ER and mitochondria. MDM12 is required for the interaction of the ER-resident membrane protein MMM1 and the outer mitochondrial membrane-resident beta-barrel protein MDM10. The MDM12-MMM1 subcomplex functions in the major beta-barrel assembly pathway that is responsible for biogenesis of all mitochondrial outer membrane beta-barrel proteins, and acts in a late step after the SAM complex. The MDM10-MDM12-MMM1 subcomplex further acts in the TOM40-specific pathway after the action of the MDM12-MMM1 complex. Essential for establishing and maintaining the structure of mitochondria and maintenance of mtDNA nucleoids. The chain is Mitochondrial distribution and morphology protein 12 from Zygosaccharomyces rouxii (strain ATCC 2623 / CBS 732 / NBRC 1130 / NCYC 568 / NRRL Y-229).